The sequence spans 348 residues: Delta(6)-protoilludene synthase 18 (348 aa).

Residues D87, N223, S227, and E231 each contribute to the Mg(2+) site. The DDXXD motif signature appears at 87–91 (DEYTD). The short motif at 223-231 (NDLVSYNRE) is the NSE/DTE motif element. (2E,6E)-farnesyl diphosphate contacts are provided by R311 and Y312.

This sequence belongs to the terpene synthase family. Requires Mg(2+) as cofactor.

The enzyme catalyses (2E,6E)-farnesyl diphosphate = Delta(6)-protoilludene + diphosphate. Terpene cyclase that catalyzes the cyclization of farnesyl diphosphate (FPP) to delta(6)-protoilludene. The protein is Delta(6)-protoilludene synthase 18 of Postia placenta (strain ATCC 44394 / Madison 698-R) (Brown rot fungus).